Consider the following 445-residue polypeptide: Trigger factor (445 aa).

The PPIase FKBP-type domain maps to 162-247; that stretch reads GDQVTIDAIG…IKAVHTAEPT (86 aa).

The protein belongs to the FKBP-type PPIase family. Tig subfamily.

It localises to the cytoplasm. The enzyme catalyses [protein]-peptidylproline (omega=180) = [protein]-peptidylproline (omega=0). Functionally, involved in protein export. Acts as a chaperone by maintaining the newly synthesized protein in an open conformation. Functions as a peptidyl-prolyl cis-trans isomerase. The sequence is that of Trigger factor from Rickettsia akari (strain Hartford).